The primary structure comprises 72 residues: Metallothionein-like protein 1 (72 aa).

Belongs to the metallothionein superfamily. Type 15 family.

Metallothioneins have a high content of cysteine residues that bind various heavy metals. The protein is Metallothionein-like protein 1 of Erythranthe guttata (Yellow monkey flower).